We begin with the raw amino-acid sequence, 674 residues long: DNA ligase (674 aa).

NAD(+) contacts are provided by residues 34–38 (DAEYD), 84–85 (SL), and Glu-116. Residue Lys-118 is the N6-AMP-lysine intermediate of the active site. Residues Arg-139, Glu-174, Lys-291, and Lys-315 each coordinate NAD(+). Zn(2+) contacts are provided by Cys-409, Cys-412, Cys-425, and Cys-430. The BRCT domain occupies 586–674 (RGEEALKGLT…TGKPVETLAS (89 aa)).

The protein belongs to the NAD-dependent DNA ligase family. LigA subfamily. The cofactor is Mg(2+). It depends on Mn(2+) as a cofactor.

The catalysed reaction is NAD(+) + (deoxyribonucleotide)n-3'-hydroxyl + 5'-phospho-(deoxyribonucleotide)m = (deoxyribonucleotide)n+m + AMP + beta-nicotinamide D-nucleotide.. In terms of biological role, DNA ligase that catalyzes the formation of phosphodiester linkages between 5'-phosphoryl and 3'-hydroxyl groups in double-stranded DNA using NAD as a coenzyme and as the energy source for the reaction. It is essential for DNA replication and repair of damaged DNA. The polypeptide is DNA ligase (Thermus scotoductus).